A 295-amino-acid polypeptide reads, in one-letter code: Acetylglutamate kinase (295 aa).

Substrate-binding positions include 66 to 67 (GG), R88, and N193.

Belongs to the acetylglutamate kinase family. ArgB subfamily.

It localises to the cytoplasm. The catalysed reaction is N-acetyl-L-glutamate + ATP = N-acetyl-L-glutamyl 5-phosphate + ADP. Its pathway is amino-acid biosynthesis; L-arginine biosynthesis; N(2)-acetyl-L-ornithine from L-glutamate: step 2/4. Functionally, catalyzes the ATP-dependent phosphorylation of N-acetyl-L-glutamate. The chain is Acetylglutamate kinase from Rhizobium etli (strain ATCC 51251 / DSM 11541 / JCM 21823 / NBRC 15573 / CFN 42).